The primary structure comprises 1012 residues: Vacuolar membrane protease (1012 aa).

The Cytoplasmic segment spans residues 1–60; sequence MRRSTDPRNLLVRRGPLLVDGESAISELDPGFFPTGDAPKMSSTTRRRFNLIAFTPGPVT. The helical transmembrane segment at 61–81 threads the bilayer; that stretch reads VISSLVYLALLIPLLLVHTIV. Residues 82 to 432 are Vacuolar-facing; it reads PSAPKSNPKG…SFAVFRLHTL (351 aa). Asparagine 159 is a glycosylation site (N-linked (GlcNAc...) asparagine). The Zn(2+) site is built by histidine 215 and aspartate 227. Glutamate 261 (proton acceptor) is an active-site residue. Zn(2+)-binding residues include glutamate 262, glutamate 287, and histidine 360. Residues 433 to 453 traverse the membrane as a helical segment; that stretch reads FAISVTLLVVCPIVLFVIGII. The Cytoplasmic portion of the chain corresponds to 454 to 487; sequence LSKMDKMYLFSIHETIPETKEKVSVRGLRGLFRY. A helical transmembrane segment spans residues 488-508; the sequence is PIILVVSSGILIGLSYLLAKV. At 509–518 the chain is on the vacuolar side; the sequence is NPFIVHSSSY. Residues 519–539 traverse the membrane as a helical segment; sequence AVWSMMLSSWIFMTWFLSCIA. Residues 540-550 lie on the Cytoplasmic side of the membrane; that stretch reads DFFRPSALHRA. The chain crosses the membrane as a helical span at residues 551 to 571; that stretch reads YTFTWQLLVMWVLLVISTVYV. Over 572–575 the chain is Vacuolar; it reads NQHD. A helical membrane pass occupies residues 576 to 596; sequence IAAGYFIVFYFAGTFLATLIS. Residues 597-710 are Cytoplasmic-facing; the sequence is YLELFALPNK…WSASLPTWTW (114 aa). Residues 614–629 are compositionally biased toward polar residues; sequence SQYPSRLGSNRSSRIL. Residues 614-660 form a disordered region; it reads SQYPSRLGSNRSSRILSPSADELPTGGDNNGEIYDGEEEPTESSSLL. A helical transmembrane segment spans residues 711-731; sequence VLQFLFVGPVVIMFIGQLGLF. Over 732-743 the chain is Vacuolar; it reads LTSAMNQVGADG. Residues 744–764 traverse the membrane as a helical segment; that stretch reads VGLLVVYIAIAVFSVLLLIPL. At 765 to 777 the chain is on the cytoplasmic side; the sequence is SPFIHRFTYHVPT. The helical transmembrane segment at 778-798 threads the bilayer; it reads FLLLVFIATLIYNLAAFPFSA. The Vacuolar segment spans residues 799–1012; the sequence is ENRLKIFFVQ…DGLVEVSRGF (214 aa). N-linked (GlcNAc...) asparagine glycosylation is found at asparagine 842 and asparagine 878.

Belongs to the peptidase M28 family. The cofactor is Zn(2+).

The protein resides in the vacuole membrane. Functionally, may be involved in vacuolar sorting and osmoregulation. In Coccidioides posadasii (strain C735) (Valley fever fungus), this protein is Vacuolar membrane protease.